The sequence spans 76 residues: Omega-agatoxin-Aa3b (76 aa).

Cystine bridges form between Cys2–Cys19, Cys9–Cys25, Cys16–Cys52, Cys18–Cys40, Cys27–Cys38, and Cys59–Cys67.

Belongs to the neurotoxin 04 (omega-agtx) family. 03 (type II/III omega-agtx) subfamily. In terms of tissue distribution, expressed by the venom gland.

It localises to the secreted. Its function is as follows. Omega-agatoxins are antagonists of voltage-gated calcium channels. This toxin blocks calcium channels in insect central neurons but not at peripheral neuromuscular junctions. In vertebrates, it is broadly active against all high-threshold Cav1/CACNA1 channels and Cav2.2/CACNA1B channels. This Agelenopsis aperta (North American funnel-web spider) protein is Omega-agatoxin-Aa3b.